Reading from the N-terminus, the 330-residue chain is Virulence plasmid integrase pGP8-D (330 aa).

Residues 39–124 (FSLFEVIMHW…SYISLTRFLN (86 aa)) form the Core-binding (CB) domain. Positions 152–327 (VKTNAMNRLQ…SREDNASKKM (176 aa)) constitute a Tyr recombinase domain. Catalysis depends on residues arginine 189, lysine 214, histidine 279, arginine 282, and histidine 305. Tyrosine 314 serves as the catalytic O-(3'-phospho-DNA)-tyrosine intermediate.

The protein belongs to the 'phage' integrase family.

In Chlamydia muridarum (strain MoPn / Nigg), this protein is Virulence plasmid integrase pGP8-D.